A 438-amino-acid polypeptide reads, in one-letter code: GTPase Der (438 aa).

EngA-type G domains follow at residues 4-168 (PVVA…PAGA) and 176-351 (VRIA…GEYR). GTP-binding positions include 10 to 17 (GRPNVGKS), 57 to 61 (DTGGI), 120 to 123 (NKVD), 182 to 189 (GRPNVGKS), 229 to 233 (DTAGM), and 294 to 297 (NKWD). A KH-like domain is found at 352-436 (RQIPTSMLNR…PVRILFRRRE (85 aa)).

It belongs to the TRAFAC class TrmE-Era-EngA-EngB-Septin-like GTPase superfamily. EngA (Der) GTPase family. Associates with the 50S ribosomal subunit.

Functionally, GTPase that plays an essential role in the late steps of ribosome biogenesis. In Desulforudis audaxviator (strain MP104C), this protein is GTPase Der.